Consider the following 290-residue polypeptide: UPF0761 membrane protein YihY (290 aa).

6 consecutive transmembrane segments (helical) span residues 44–64 (LLSL…FPMF), 104–124 (VGAC…DSAL), 140–160 (FAVY…SLAI), 183–203 (IFPL…VPTI), 210–230 (AIVG…GFAL), and 244–264 (VLAV…IVLL).

The protein belongs to the UPF0761 family.

It is found in the cell inner membrane. The protein is UPF0761 membrane protein YihY of Escherichia fergusonii (strain ATCC 35469 / DSM 13698 / CCUG 18766 / IAM 14443 / JCM 21226 / LMG 7866 / NBRC 102419 / NCTC 12128 / CDC 0568-73).